We begin with the raw amino-acid sequence, 435 residues long: uncharacterized protein (435 aa).

WD repeat units lie at residues 105–149 (DLEY…GIDS), 164–204 (HNNA…SKTQ), and 207–247 (AHDK…HSTI). Ser266 is modified (phosphoserine). The WD 4 repeat unit spans residues 313-353 (GHKGDVNAVKWMPGSKSKLATCGDDCVVSLWDLDQPVNPSP). The interval 352–371 (SPAPTLSVSGTTPGMTGSTS) is disordered. The segment covering 358 to 371 (SVSGTTPGMTGSTS) has biased composition (low complexity). Ser388 carries the phosphoserine modification.

It is found in the cytoplasm. The protein resides in the golgi apparatus. This is an uncharacterized protein from Schizosaccharomyces pombe (strain 972 / ATCC 24843) (Fission yeast).